Reading from the N-terminus, the 81-residue chain is ATP synthase subunit C, cyanelle (81 aa).

The next 2 membrane-spanning stretches (helical) occupy residues A7–G27 and L57–A77.

It belongs to the ATPase C chain family. F-type ATPases have 2 components, F(1) - the catalytic core - and F(0) - the membrane proton channel. F(1) has five subunits: alpha(3), beta(3), gamma(1), delta(1), epsilon(1). F(0) has four main subunits: a(1), b(1), b'(1) and c(10-14). The alpha and beta chains form an alternating ring which encloses part of the gamma chain. F(1) is attached to F(0) by a central stalk formed by the gamma and epsilon chains, while a peripheral stalk is formed by the delta, b and b' chains.

Its subcellular location is the plastid. It localises to the cyanelle thylakoid membrane. Its function is as follows. F(1)F(0) ATP synthase produces ATP from ADP in the presence of a proton or sodium gradient. F-type ATPases consist of two structural domains, F(1) containing the extramembraneous catalytic core and F(0) containing the membrane proton channel, linked together by a central stalk and a peripheral stalk. During catalysis, ATP synthesis in the catalytic domain of F(1) is coupled via a rotary mechanism of the central stalk subunits to proton translocation. Key component of the F(0) channel; it plays a direct role in translocation across the membrane. A homomeric c-ring of between 10-14 subunits forms the central stalk rotor element with the F(1) delta and epsilon subunits. This chain is ATP synthase subunit C, cyanelle, found in Cyanophora paradoxa.